Here is a 1183-residue protein sequence, read N- to C-terminus: Putative ATP-dependent RNA helicase PB1A10.06c (1183 aa).

Disordered regions lie at residues 1 to 92 and 165 to 315; these read MGRL…KKRL and ETTT…RASR. Over residues 60 to 81 the composition is skewed to basic and acidic residues; sequence VPKEERQKRKQELKDQLLKENE. 2 stretches are compositionally biased toward low complexity: residues 165 to 176 and 184 to 196; these read ETTTTKSSTAET and TRSGFGFGFSTGT. Residues 224–251 show a composition bias toward acidic residues; that stretch reads EDPEYDSAEEDYLSTDSEEFSEDSDNSS. Residues 252 to 270 show a composition bias toward basic and acidic residues; that stretch reads EENKDTNEPSTKDAEKTVP. Positions 292 to 308 are enriched in acidic residues; sequence ENEDFDLETSEDDSSDD. A Helicase ATP-binding domain is found at 408–585; it reads MEQIFANDVV…KLLFSVPPPI (178 aa). 421 to 428 is a binding site for ATP; sequence GATGSGKT. The DEAH box signature appears at 522–525; that stretch reads DEAH. The Helicase C-terminal domain occupies 611-831; it reads AFDKVCLIHK…SIVLQMKNMN (221 aa). A compositionally biased stretch (acidic residues) spans 673-683; sequence EDLQSETEDID. Residues 673-696 are disordered; it reads EDLQSETEDIDQVPTSSSSSVTYD.

Belongs to the DEAD box helicase family. DEAH subfamily.

The protein resides in the nucleus. The protein localises to the nucleolus. It carries out the reaction ATP + H2O = ADP + phosphate + H(+). This is Putative ATP-dependent RNA helicase PB1A10.06c from Schizosaccharomyces pombe (strain 972 / ATCC 24843) (Fission yeast).